The primary structure comprises 457 residues: tRNA modification GTPase MnmE (457 aa).

Residues Arg24, Glu81, and Lys121 each coordinate (6S)-5-formyl-5,6,7,8-tetrahydrofolate. A TrmE-type G domain is found at 218-380 (GIKIVITGKP…LLKYLTKIIS (163 aa)). Residue Asn228 coordinates K(+). GTP contacts are provided by residues 228-233 (NVGKSS), 247-253 (TNIAGTT), 272-275 (DTAG), and 338-341 (NKAD). Ser232 serves as a coordination point for Mg(2+). Positions 247, 249, and 252 each coordinate K(+). Thr253 is a Mg(2+) binding site. Residue Lys457 coordinates (6S)-5-formyl-5,6,7,8-tetrahydrofolate.

It belongs to the TRAFAC class TrmE-Era-EngA-EngB-Septin-like GTPase superfamily. TrmE GTPase family. Homodimer. Heterotetramer of two MnmE and two MnmG subunits. K(+) serves as cofactor.

The protein resides in the cytoplasm. In terms of biological role, exhibits a very high intrinsic GTPase hydrolysis rate. Involved in the addition of a carboxymethylaminomethyl (cmnm) group at the wobble position (U34) of certain tRNAs, forming tRNA-cmnm(5)s(2)U34. This chain is tRNA modification GTPase MnmE, found in Baumannia cicadellinicola subsp. Homalodisca coagulata.